The sequence spans 216 residues: GTP cyclohydrolase 1 (216 aa).

Zn(2+) is bound by residues Cys108, His111, and Cys179.

This sequence belongs to the GTP cyclohydrolase I family. In terms of assembly, toroid-shaped homodecamer, composed of two pentamers of five dimers.

It catalyses the reaction GTP + H2O = 7,8-dihydroneopterin 3'-triphosphate + formate + H(+). The protein operates within cofactor biosynthesis; 7,8-dihydroneopterin triphosphate biosynthesis; 7,8-dihydroneopterin triphosphate from GTP: step 1/1. The protein is GTP cyclohydrolase 1 of Shewanella amazonensis (strain ATCC BAA-1098 / SB2B).